A 384-amino-acid chain; its full sequence is Putative 8-amino-7-oxononanoate synthase (384 aa).

Residue R22 participates in substrate binding. 109–110 serves as a coordination point for pyridoxal 5'-phosphate; it reads GY. Position 134 (H134) interacts with substrate. Residues S182, 207 to 210, and 236 to 239 each bind pyridoxal 5'-phosphate; these read DDAH and TLSK. The residue at position 239 (K239) is an N6-(pyridoxal phosphate)lysine. Residue T348 participates in substrate binding.

This sequence belongs to the class-II pyridoxal-phosphate-dependent aminotransferase family. BioF subfamily. Homodimer. Pyridoxal 5'-phosphate is required as a cofactor.

It catalyses the reaction 6-carboxyhexanoyl-[ACP] + L-alanine + H(+) = (8S)-8-amino-7-oxononanoate + holo-[ACP] + CO2. It participates in cofactor biosynthesis; biotin biosynthesis. In terms of biological role, catalyzes the decarboxylative condensation of pimeloyl-[acyl-carrier protein] and L-alanine to produce 8-amino-7-oxononanoate (AON), [acyl-carrier protein], and carbon dioxide. The protein is Putative 8-amino-7-oxononanoate synthase (bioF) of Caulobacter vibrioides (strain ATCC 19089 / CIP 103742 / CB 15) (Caulobacter crescentus).